Here is a 399-residue protein sequence, read N- to C-terminus: (R)-2-hydroxy-4-methylpentanoate CoA-transferase (399 aa).

D171 (nucleophile) is an active-site residue.

This sequence belongs to the CoA-transferase III family. As to quaternary structure, homodimer.

It catalyses the reaction 4-methylpentanoyl-CoA + (2R)-hydroxy-4-methylpentanoate = (R)-2-hydroxy-4-methylpentanoyl-CoA + 4-methylpentanoate. It participates in amino-acid degradation; L-leucine degradation. Involved in the reductive branch of L-leucine fermentation. Catalyzes the transfer of the CoA moiety from 4-methylpentanoyl-CoA (isocaproyl-CoA) to (R)-2-hydroxy-4-methylpentanoate ((R)-2-hydroxyisocaproate), leading to the formation of (R)-2-hydroxy-4-methylpentanoyl-CoA. Other CoA thioesters, such as acetyl-CoA or butyryl-CoA, are not accepted as substrates. The sequence is that of (R)-2-hydroxy-4-methylpentanoate CoA-transferase from Clostridioides difficile (Peptoclostridium difficile).